We begin with the raw amino-acid sequence, 397 residues long: Protein Rep52 (397 aa).

The SF3 helicase domain occupies 84-239 (DPQYAASVFL…LDHDFGKVTK (156 aa)). 110–117 (GPATTGKT) is an ATP binding site. Residues 265–296 (GGAKKRPAPSDADISEPKRVRESVAQPSTSDA) are disordered.

As to quaternary structure, homooligomer. Interacts with host PRKX.

It is found in the host nucleus. In terms of biological role, plays a critical role during packaging of viral DNA into empty capsids, where they are thought to be part of the packaging motor complex. The single stranded genomic DNA is packaged in a 3' to 5' direction and requires the association between viral DNA and Rep40. Regulates host PKA activity by interacting with host PRKX as a mechanism to interfere with helper virus propagation and to promote its own replication. This Mammalia (AAV-2) protein is Protein Rep52 (Rep52).